The primary structure comprises 89 residues: UPF0250 protein CV_3095 (89 aa).

It belongs to the UPF0250 family.

The sequence is that of UPF0250 protein CV_3095 from Chromobacterium violaceum (strain ATCC 12472 / DSM 30191 / JCM 1249 / CCUG 213 / NBRC 12614 / NCIMB 9131 / NCTC 9757 / MK).